The following is a 399-amino-acid chain: Acetate kinase (399 aa).

Asn7 serves as a coordination point for Mg(2+). Lys14 serves as a coordination point for ATP. Arg91 lines the substrate pocket. The active-site Proton donor/acceptor is Asp148. Residues 208 to 212 (HLGNG), 283 to 285 (DFR), and 331 to 335 (GLGEN) each bind ATP. Residue Glu384 participates in Mg(2+) binding.

Belongs to the acetokinase family. As to quaternary structure, homodimer. Mg(2+) serves as cofactor. It depends on Mn(2+) as a cofactor.

It localises to the cytoplasm. The catalysed reaction is acetate + ATP = acetyl phosphate + ADP. It participates in metabolic intermediate biosynthesis; acetyl-CoA biosynthesis; acetyl-CoA from acetate: step 1/2. Its function is as follows. Catalyzes the formation of acetyl phosphate from acetate and ATP. Can also catalyze the reverse reaction. This is Acetate kinase from Desulfitobacterium hafniense (strain DSM 10664 / DCB-2).